The primary structure comprises 303 residues: MPSFDFDIPRRSPQEIAKGMVAIPGGTFRMGGEDPDAFPEDGEGPVRTVRLSPFLIDRYAVSNRQFAAFVKATGYVTDAERYGWSFVFHAHVAPGTPVMDAVVPEAPWWVAVPGAYWKAPEGPGSSITDRPNHPVVHVSWNDAVAYATWAGKRLPTEAEWEMAARGGLDQARYPWGNELTPRGRHRCNIWQGTFPVHDTGEDGYTGTAPVNAFAPNGYGLYNVAGNVWEWCADWWSADWHATESPATRIDPRGPETGTARVTKGGSFLCHESYCNRYRVAARTCNTPDSSAAHTGFRCAADPL.

Ca(2+) is bound by residues asparagine 188, isoleucine 189, aspartate 202, tyrosine 204, asparagine 222, valine 223, glycine 225, and valine 227. Positions 269 and 274 each coordinate Cu(+).

This sequence belongs to the sulfatase-modifying factor family. Cu(+) serves as cofactor.

It carries out the reaction L-cysteinyl-[sulfatase] + 2 a thiol + O2 = an organic disulfide + 3-oxo-L-alanyl-[sulfatase] + hydrogen sulfide + H2O + H(+). Its pathway is protein modification; sulfatase oxidation. Oxidase that catalyzes the conversion of cysteine to 3-oxoalanine on target proteins. 3-oxoalanine modification, which is also named formylglycine (fGly), occurs in the maturation of arylsulfatases and some alkaline phosphatases that use the hydrated form of 3-oxoalanine as a catalytic nucleophile. The chain is Formylglycine-generating enzyme from Thermomonospora curvata (strain ATCC 19995 / DSM 43183 / JCM 3096 / KCTC 9072 / NBRC 15933 / NCIMB 10081 / Henssen B9).